We begin with the raw amino-acid sequence, 179 residues long: 3-hydroxyanthranilate 3,4-dioxygenase 2 (179 aa).

Residue Arg-44 coordinates O2. Positions 48, 60, and 99 each coordinate Fe cation. Glu-60 contacts substrate. Substrate is bound by residues Arg-103 and Glu-113.

The protein belongs to the 3-HAO family. Fe(2+) is required as a cofactor.

Its subcellular location is the cytoplasm. It catalyses the reaction 3-hydroxyanthranilate + O2 = (2Z,4Z)-2-amino-3-carboxymuconate 6-semialdehyde. Its pathway is cofactor biosynthesis; NAD(+) biosynthesis; quinolinate from L-kynurenine: step 3/3. In terms of biological role, catalyzes the oxidative ring opening of 3-hydroxyanthranilate to 2-amino-3-carboxymuconate semialdehyde, which spontaneously cyclizes to quinolinate. The chain is 3-hydroxyanthranilate 3,4-dioxygenase 2 (bna1-2) from Aspergillus oryzae (strain ATCC 42149 / RIB 40) (Yellow koji mold).